The following is an 818-amino-acid chain: Glycerol-3-phosphate acyltransferase (818 aa).

The HXXXXD motif motif lies at 305–310; sequence HRSHMD.

The protein belongs to the GPAT/DAPAT family.

It localises to the cell inner membrane. It carries out the reaction sn-glycerol 3-phosphate + an acyl-CoA = a 1-acyl-sn-glycero-3-phosphate + CoA. It participates in phospholipid metabolism; CDP-diacylglycerol biosynthesis; CDP-diacylglycerol from sn-glycerol 3-phosphate: step 1/3. In Photorhabdus laumondii subsp. laumondii (strain DSM 15139 / CIP 105565 / TT01) (Photorhabdus luminescens subsp. laumondii), this protein is Glycerol-3-phosphate acyltransferase.